The following is a 129-amino-acid chain: Glycine cleavage system H protein (129 aa).

Residues 24 to 106 (LFKIGVSEFA…IGDGWLLIIK (83 aa)) enclose the Lipoyl-binding domain. The residue at position 65 (Lys65) is an N6-lipoyllysine.

Belongs to the GcvH family. As to quaternary structure, the glycine cleavage system is composed of four proteins: P, T, L and H. It depends on (R)-lipoate as a cofactor.

In terms of biological role, the glycine cleavage system catalyzes the degradation of glycine. The H protein shuttles the methylamine group of glycine from the P protein to the T protein. The protein is Glycine cleavage system H protein of Prochlorococcus marinus subsp. pastoris (strain CCMP1986 / NIES-2087 / MED4).